Consider the following 829-residue polypeptide: Leucine--tRNA ligase (829 aa).

The short motif at 40–50 (PYPSGNIHMGH) is the 'HIGH' region element. The 'KMSKS' region signature appears at 594-598 (KMSKS). Residue Lys-597 coordinates ATP.

This sequence belongs to the class-I aminoacyl-tRNA synthetase family.

Its subcellular location is the cytoplasm. It catalyses the reaction tRNA(Leu) + L-leucine + ATP = L-leucyl-tRNA(Leu) + AMP + diphosphate. The protein is Leucine--tRNA ligase of Anaplasma marginale (strain St. Maries).